The following is a 111-amino-acid chain: uncharacterized protein (111 aa).

It belongs to the asfivirus E111R family.

This is an uncharacterized protein from Ornithodoros (relapsing fever ticks).